Here is a 108-residue protein sequence, read N- to C-terminus: Nucleoid-associated protein HEAR1046 (108 aa).

The tract at residues 86 to 108 (TSQEKMAGATAGMPMPPGFKMPF) is disordered. Pro residues predominate over residues 99 to 108 (PMPPGFKMPF).

It belongs to the YbaB/EbfC family. Homodimer.

It is found in the cytoplasm. It localises to the nucleoid. Its function is as follows. Binds to DNA and alters its conformation. May be involved in regulation of gene expression, nucleoid organization and DNA protection. The chain is Nucleoid-associated protein HEAR1046 from Herminiimonas arsenicoxydans.